The sequence spans 144 residues: 3-dehydroquinate dehydratase (144 aa).

Tyr-22 (proton acceptor) is an active-site residue. Positions 73, 79, and 86 each coordinate substrate. The Proton donor role is filled by His-99. Substrate-binding positions include 100–101 (LS) and Arg-110.

The protein belongs to the type-II 3-dehydroquinase family. Homododecamer.

It catalyses the reaction 3-dehydroquinate = 3-dehydroshikimate + H2O. It participates in metabolic intermediate biosynthesis; chorismate biosynthesis; chorismate from D-erythrose 4-phosphate and phosphoenolpyruvate: step 3/7. Catalyzes a trans-dehydration via an enolate intermediate. This Herpetosiphon aurantiacus (strain ATCC 23779 / DSM 785 / 114-95) protein is 3-dehydroquinate dehydratase.